The following is a 764-amino-acid chain: 1,4-alpha-glucan branching enzyme GlgB (764 aa).

Asp434 acts as the Nucleophile in catalysis. The active-site Proton donor is Glu487.

This sequence belongs to the glycosyl hydrolase 13 family. GlgB subfamily. Monomer.

The catalysed reaction is Transfers a segment of a (1-&gt;4)-alpha-D-glucan chain to a primary hydroxy group in a similar glucan chain.. The protein operates within glycan biosynthesis; glycogen biosynthesis. Functionally, catalyzes the formation of the alpha-1,6-glucosidic linkages in glycogen by scission of a 1,4-alpha-linked oligosaccharide from growing alpha-1,4-glucan chains and the subsequent attachment of the oligosaccharide to the alpha-1,6 position. The polypeptide is 1,4-alpha-glucan branching enzyme GlgB (Nostoc sp. (strain PCC 7120 / SAG 25.82 / UTEX 2576)).